The following is a 100-amino-acid chain: Toxin ParE3 (100 aa).

It belongs to the RelE toxin family.

Its function is as follows. Toxic component of a type II toxin-antitoxin (TA) system. Its toxic effect is neutralized by coexpression with cognate antitoxin ParD3 but no other ParD or RelB antitoxin. The chain is Toxin ParE3 (parE3) from Caulobacter vibrioides (strain ATCC 19089 / CIP 103742 / CB 15) (Caulobacter crescentus).